Reading from the N-terminus, the 352-residue chain is MEDSRETSPSSNNSSEELSSALQLSKGMSIFLDILRRADKNDDGKLSFEEFKAYFADGVLSGEELHELFHTIDTHNTNNLDTEELCEYFSQHLGEYENVLAALEDLNLSILKAMGKTKKDYQEASNLEQFVTRFLLKETLNQLQSLQNSLECAMETTEEQTRQERQGPSKPEVLSIQWPGKRSSRRVQRHNSFSPNSPQFNVSSPALLEEDNQWMTQINRLQKLIDRLEKKDLKLEPLEEEVIEENTKPHIMLVQRQMSVTEEDLEEFQLALKHYVESASAQSGCLRISIQKLSNESRYMIYEFWENSSVWNRHLQTNYSKTFQRSNVDFLETPELTSTMLVPASWWILKNN.

Phosphoserine is present on S4. EF-hand domains lie at K26 to S61 and L60 to E95. Residues D39, N41, D43, K45, and E50 each coordinate Ca(2+). A coiled-coil region spans residues L135–Q163. The disordered stretch occupies residues E155 to V202. Polar residues predominate over residues H190–V202. Residues S192 and S197 each carry the phosphoserine modification. The stretch at E209–Y275 forms a coiled coil. The ABM domain occupies M252 to M340.

In terms of assembly, interacts with STX1. May interact with CPNE6.

It localises to the cytoplasm. The sequence is that of N-terminal EF-hand calcium-binding protein 1 (Necab1) from Rattus norvegicus (Rat).